The sequence spans 502 residues: Probable cytosol aminopeptidase (502 aa).

The Mn(2+) site is built by Lys-269 and Asp-274. The active site involves Lys-281. Residues Asp-292, Asp-351, and Glu-353 each coordinate Mn(2+). Arg-355 is an active-site residue.

The protein belongs to the peptidase M17 family. Mn(2+) is required as a cofactor.

The protein resides in the cytoplasm. It catalyses the reaction Release of an N-terminal amino acid, Xaa-|-Yaa-, in which Xaa is preferably Leu, but may be other amino acids including Pro although not Arg or Lys, and Yaa may be Pro. Amino acid amides and methyl esters are also readily hydrolyzed, but rates on arylamides are exceedingly low.. The enzyme catalyses Release of an N-terminal amino acid, preferentially leucine, but not glutamic or aspartic acids.. Presumably involved in the processing and regular turnover of intracellular proteins. Catalyzes the removal of unsubstituted N-terminal amino acids from various peptides. In Shewanella sediminis (strain HAW-EB3), this protein is Probable cytosol aminopeptidase.